Reading from the N-terminus, the 480-residue chain is MNRILLTLLTLTLLAGCQRVAVEETKLVPPAVEKTVLNVGTIYGSQIYVTTGQGEAGFDYEMASRFADHLELELAMKPYSNIKELYQALNSGEVDLIAAGLADTPTRRENFRLGPPLYRVNQVLVYKQGTPQPKDISQLKDEITVITDSSFVDTLSQLQKIYPELVWDQEQDKDNEELLAMIARGEISYTIADSTTFEISRRYMPELRAGLTLKEKQAIVWLLPAQNSDKLMSELLTFWHGEKLDGTLAHLDEKYFAHVKRFDYVDTRAFLRAIDNKLPKYKERFQYYAGDLDWRKLAATAYQESHWNPNARSPTGVRGLMMLTLPTAKQMGIENRLDAEQSIKGGAKYLRGILNRLPDSIPDNQRMWFALASYNIGYGHVEDARKLAESMGLNPSAWRDLKEVLPLLQKRKYYKQTRYGYARGNEAVHYVDNIRRYYDTLVWIDNQNKLLEENQALIEESQLADQIGIGEKAITGAQPE.

The N-terminal stretch at 1–15 (MNRILLTLLTLTLLA) is a signal peptide. The interval 16 to 259 (GCQRVAVEET…HLDEKYFAHV (244 aa)) is non-LT domain. The LT domain stretch occupies residues 260–480 (KRFDYVDTRA…EKAITGAQPE (221 aa)). Glu-304 is a catalytic residue.

In the N-terminal section; belongs to the bacterial solute-binding protein 3 family. The protein in the C-terminal section; belongs to the transglycosylase Slt family.

Its subcellular location is the cell outer membrane. It catalyses the reaction Exolytic cleavage of the (1-&gt;4)-beta-glycosidic linkage between N-acetylmuramic acid (MurNAc) and N-acetylglucosamine (GlcNAc) residues in peptidoglycan, from either the reducing or the non-reducing ends of the peptidoglycan chains, with concomitant formation of a 1,6-anhydrobond in the MurNAc residue.. Functionally, murein-degrading enzyme that degrades murein glycan strands and insoluble, high-molecular weight murein sacculi, with the concomitant formation of a 1,6-anhydromuramoyl product. Lytic transglycosylases (LTs) play an integral role in the metabolism of the peptidoglycan (PG) sacculus. Their lytic action creates space within the PG sacculus to allow for its expansion as well as for the insertion of various structures such as secretion systems and flagella. The protein is Membrane-bound lytic murein transglycosylase F of Shewanella woodyi (strain ATCC 51908 / MS32).